Consider the following 304-residue polypeptide: UDP-N-acetylenolpyruvoylglucosamine reductase (304 aa).

One can recognise an FAD-binding PCMH-type domain in the interval 32 to 198; it reads RVGGPADILV…LSAELELQEG (167 aa). Residue Arg-177 is part of the active site. Ser-227 (proton donor) is an active-site residue. Glu-297 is a catalytic residue.

Belongs to the MurB family. FAD is required as a cofactor.

Its subcellular location is the cytoplasm. The catalysed reaction is UDP-N-acetyl-alpha-D-muramate + NADP(+) = UDP-N-acetyl-3-O-(1-carboxyvinyl)-alpha-D-glucosamine + NADPH + H(+). Its pathway is cell wall biogenesis; peptidoglycan biosynthesis. Cell wall formation. The chain is UDP-N-acetylenolpyruvoylglucosamine reductase from Clostridioides difficile (strain 630) (Peptoclostridium difficile).